A 263-amino-acid polypeptide reads, in one-letter code: Putative TATA-binding protein pB263R (263 aa).

This sequence belongs to the asfivirus B263R family.

Putative TATA-binding protein. The polypeptide is Putative TATA-binding protein pB263R (Ornithodoros (relapsing fever ticks)).